The sequence spans 470 residues: Ribulose bisphosphate carboxylase large chain (470 aa).

Residues asparagine 115 and threonine 165 each coordinate substrate. Catalysis depends on lysine 167, which acts as the Proton acceptor. Lysine 169 is a substrate binding site. 3 residues coordinate Mg(2+): lysine 193, aspartate 195, and glutamate 196. N6-carboxylysine is present on lysine 193. Catalysis depends on histidine 286, which acts as the Proton acceptor. 3 residues coordinate substrate: arginine 287, histidine 319, and serine 371.

This sequence belongs to the RuBisCO large chain family. Type I subfamily. Heterohexadecamer of 8 large chains and 8 small chains. It depends on Mg(2+) as a cofactor.

The protein resides in the carboxysome. The catalysed reaction is 2 (2R)-3-phosphoglycerate + 2 H(+) = D-ribulose 1,5-bisphosphate + CO2 + H2O. It carries out the reaction D-ribulose 1,5-bisphosphate + O2 = 2-phosphoglycolate + (2R)-3-phosphoglycerate + 2 H(+). Its function is as follows. RuBisCO catalyzes two reactions: the carboxylation of D-ribulose 1,5-bisphosphate, the primary event in carbon dioxide fixation, as well as the oxidative fragmentation of the pentose substrate in the photorespiration process. Both reactions occur simultaneously and in competition at the same active site. This Prochlorococcus marinus (strain SARG / CCMP1375 / SS120) protein is Ribulose bisphosphate carboxylase large chain.